A 584-amino-acid polypeptide reads, in one-letter code: FAD-linked oxidoreductase OXR2 (584 aa).

A signal peptide spans 1 to 22; the sequence is MRSIISAFILSLNFCTQPLVRG. N-linked (GlcNAc...) asparagine glycans are attached at residues Asn-75, Asn-97, Asn-115, Asn-225, Asn-302, Asn-321, and Asn-507. Residues 128–310 enclose the FAD-binding PCMH-type domain; that stretch reads LGMLSEKYIA…LNATFKVEPV (183 aa).

Belongs to the oxygen-dependent FAD-linked oxidoreductase family. The cofactor is FAD.

The protein operates within secondary metabolite biosynthesis. Functionally, FAD-linked oxidoreductase; part of the gene cluster that mediates the biosynthesis of a tyrosine-derived cytochalasan acting as a fungal signal recognized by resistant rice plants and leads to avirulence in Pi33 resistant rice cultivars. The first step in the pathway is catalyzed by the hybrid PKS-NRPS ACE1, assisted by the enoyl reductase RAP1, that are responsible for fusion of the tyrosine precursor and the polyketide backbone. The polyketide synthase module (PKS) of ACE1 is responsible for the synthesis of the polyketide backbone and the downstream nonribosomal peptide synthetase (NRPS) amidates the carboxyl end of the polyketide with the tyrosine precursor. Because ACE1 lacks a designated enoylreductase (ER) domain, the required activity is provided the enoyl reductase RAP1. Reduction by the hydrolyase ORFZ, followed by dehydration and intra-molecular Diels-Alder cyclization by the Diels-Alderase ORF3 then yield the required isoindolone-fused macrocycle. A number of oxidative steps catalyzed by the tailoring enzymes identified within the cluster, including cytochrome P450 monooxygenases CYP1 to CYP4, the FAD-linked oxidoreductase OXR2 and the short-chain dehydrogenase/reductase OXR1, are further required to afford the final cytochalasans that confer avirulence and which have still to be identified. The monooxygenase CYP1 has been shown to be a site-selective C-18 hydroxylase whereas the function of CYP3 is the site-selective epoxidation of the C-6/C-7 olefin that is present in some intermediate compounds. Finally, SYN2 and RAP2 are not required for avirulence in Pi33 resistant rice cultivars. The sequence is that of FAD-linked oxidoreductase OXR2 from Pyricularia oryzae (strain 70-15 / ATCC MYA-4617 / FGSC 8958) (Rice blast fungus).